The chain runs to 268 residues: uncharacterized protein (268 aa).

This sequence belongs to the LarE family.

This is an uncharacterized protein from Synechocystis sp. (strain ATCC 27184 / PCC 6803 / Kazusa).